A 184-amino-acid chain; its full sequence is 3-hydroxydecanoyl-[acyl-carrier-protein] dehydratase (184 aa).

Residue H77 is part of the active site.

Belongs to the thioester dehydratase family. FabA subfamily. In terms of assembly, homodimer.

The protein localises to the cytoplasm. It carries out the reaction a (3R)-hydroxyacyl-[ACP] = a (2E)-enoyl-[ACP] + H2O. The enzyme catalyses (3R)-hydroxydecanoyl-[ACP] = (2E)-decenoyl-[ACP] + H2O. It catalyses the reaction (2E)-decenoyl-[ACP] = (3Z)-decenoyl-[ACP]. It participates in lipid metabolism; fatty acid biosynthesis. In terms of biological role, necessary for the introduction of cis unsaturation into fatty acids. Catalyzes the dehydration of (3R)-3-hydroxydecanoyl-ACP to E-(2)-decenoyl-ACP and then its isomerization to Z-(3)-decenoyl-ACP. Can catalyze the dehydratase reaction for beta-hydroxyacyl-ACPs with saturated chain lengths up to 16:0, being most active on intermediate chain length. This Hyphomonas neptunium (strain ATCC 15444) protein is 3-hydroxydecanoyl-[acyl-carrier-protein] dehydratase.